A 431-amino-acid polypeptide reads, in one-letter code: Probable oxidoreductase OrdL (431 aa).

The chain is Probable oxidoreductase OrdL (ordL) from Haemophilus influenzae (strain ATCC 51907 / DSM 11121 / KW20 / Rd).